Reading from the N-terminus, the 570-residue chain is MLNKKPPYLILSLIMIKTQKSKQTAVRKLIPGNVISLKITAMGANNVGINEFTFGIPVLVPNAKLGETVQAKVLKILASKKIAIAKLIKVVTKTNATETNNLAALTPGATLDVTITKLGPNSTGIADLGNNYNNVNKLIVKKSAITIGEKVTVLVTRVKNGYAFGVATVSTQRLNQVSTSLTQNSFKGTKFTVVLPKNAKRYLKHLVFKVTTATAQNLSVNGFEQTLFKKGAVGLDTRINNQNGSAGNLTTVPTNTILFVKPNLGAKLGDKVQIQIIKFASIENGTLTYNVAIAKIIKLNPLSTPQKKAFVRSSLRQMLKSGMHYGEKAIKCNARMKNYVWTRKKGTDTKVEARPLIKKGRNLINLLKTRRCLTKALAQLTKYAAKGKTFLFVGTKKAASGLVARAALFSKKAFFVNTRWLGGMLTNWKTILKSISKIRPILKEKQMIIKDILEKRQTIKARLIQKALLLRKKSKLMLKKGRLLIQMLKQNNSNSTSGKQAVRFLFTEKTNLLNTKRKEFVSKGILLLEKRQQLVVKRQELITQSQTLKSKAIQLTNTISQFIKQFNLFT.

The interval 1 to 306 (MLNKKPPYLI…IKLNPLSTPQ (306 aa)) is N-terminal extension. TRAM domains are found at residues 28-89 (KLIP…KLIK) and 104-169 (ALTP…VATV).

Belongs to the universal ribosomal protein uS2 family.

The protein resides in the plastid. Its subcellular location is the chloroplast. The sequence is that of Small ribosomal subunit protein uS2c (rps2-1) from Chlamydomonas reinhardtii (Chlamydomonas smithii).